We begin with the raw amino-acid sequence, 237 residues long: Probable transcriptional regulatory protein NIS_0560 (237 aa).

This sequence belongs to the TACO1 family.

It localises to the cytoplasm. This Nitratiruptor sp. (strain SB155-2) protein is Probable transcriptional regulatory protein NIS_0560.